Consider the following 258-residue polypeptide: Phosphoadenosine 5'-phosphosulfate reductase (258 aa).

The Nucleophile; cysteine thiosulfonate intermediate role is filled by Cys-244.

This sequence belongs to the PAPS reductase family. CysH subfamily.

It localises to the cytoplasm. It catalyses the reaction [thioredoxin]-disulfide + sulfite + adenosine 3',5'-bisphosphate + 2 H(+) = [thioredoxin]-dithiol + 3'-phosphoadenylyl sulfate. Its pathway is sulfur metabolism; hydrogen sulfide biosynthesis; sulfite from sulfate: step 3/3. In terms of biological role, catalyzes the formation of sulfite from phosphoadenosine 5'-phosphosulfate (PAPS) using thioredoxin as an electron donor. The sequence is that of Phosphoadenosine 5'-phosphosulfate reductase from Vibrio atlanticus (strain LGP32) (Vibrio splendidus (strain Mel32)).